A 269-amino-acid chain; its full sequence is Hydroxypyruvate/pyruvate aldolase (269 aa).

His-48 functions as the Proton acceptor in the catalytic mechanism. Glu-152 and Asp-178 together coordinate a divalent metal cation.

This sequence belongs to the HpcH/HpaI aldolase family. The cofactor is a divalent metal cation.

The catalysed reaction is D-glyceraldehyde + pyruvate = 2-dehydro-3-deoxy-L-galactonate. Aldolase which can catalyze in vitro the aldolisation reaction between hydroxypyruvate (HPA) or pyruvate (PA) and D-glyceraldehyde (D-GA). The condensation of pyruvate and D-glyceraldehyde produces 2-dehydro-3-deoxy-L-galactonate as the major product. Has weak activity with hydroxypyruvate and D-glyceraldehyde. This Delftia acidovorans (strain DSM 14801 / SPH-1) protein is Hydroxypyruvate/pyruvate aldolase.